Here is a 316-residue protein sequence, read N- to C-terminus: ATP synthase gamma chain (316 aa).

Belongs to the ATPase gamma chain family. F-type ATPases have 2 components, CF(1) - the catalytic core - and CF(0) - the membrane proton channel. CF(1) has five subunits: alpha(3), beta(3), gamma(1), delta(1), epsilon(1). CF(0) has three main subunits: a, b and c.

The protein resides in the cellular thylakoid membrane. Its function is as follows. Produces ATP from ADP in the presence of a proton gradient across the membrane. The gamma chain is believed to be important in regulating ATPase activity and the flow of protons through the CF(0) complex. This chain is ATP synthase gamma chain, found in Prochlorococcus marinus subsp. pastoris (strain CCMP1986 / NIES-2087 / MED4).